The primary structure comprises 1557 residues: Probable kinase PglW (1557 aa).

The region spanning 12 to 130 (SEFEHERRGL…VAEAVCFTDN (119 aa)) is the NERD domain. Protein kinase domains follow at residues 195-490 (ELER…LEVV) and 530-816 (WEVR…KVFL). Residues 536–544 (LGTGSTSRA) and K564 each bind ATP. 2 disordered regions span residues 615–634 (DERD…RRRE) and 821–861 (TVPS…QRDR). Low complexity predominate over residues 830 to 849 (PAAPADGAAPAEGAAAGIAD).

It belongs to the protein kinase superfamily. Ser/Thr protein kinase family.

BREX systems (bacteriophage exclusion) provide immunity against bacteriophage. Part of a type 2 BREX system. Previously called the phage growth limitation (Pgl) system, it confers protection against bacteriophage phiC31. The bacteria allows one cycle of phage infection, but subsequent cycles are impaired, protecting the original bacterial colony. The system undergoes high rates (10(-3) to 10(-4)) of phase reversion, i.e. loss and regain of phiC31 resistance. When the pglW-pglX-pglY-pglZ genes are transformed into a susceptible S.lividans (strain 1326) they confer resistance to infection by phage phiC31 and phiBT1; all 4 genes are necessary. The proteins has kinase domains and might bind DNA. In terms of biological role, autophosphorylates when synthesized in vitro, cannot be expressed in E.coli. The sequence is that of Probable kinase PglW from Streptomyces coelicolor (strain ATCC BAA-471 / A3(2) / M145).